The sequence spans 268 residues: Octanoyltransferase (268 aa).

The region spanning 73-261 is the BPL/LPL catalytic domain; the sequence is GEADELVWLL…AFEEVFGPAV (189 aa). Residues 112-119, 192-194, and 205-207 contribute to the substrate site; these read RGGEYTYH, ALG, and GLS. The active-site Acyl-thioester intermediate is the cysteine 223.

It belongs to the LipB family.

It is found in the cytoplasm. The catalysed reaction is octanoyl-[ACP] + L-lysyl-[protein] = N(6)-octanoyl-L-lysyl-[protein] + holo-[ACP] + H(+). It participates in protein modification; protein lipoylation via endogenous pathway; protein N(6)-(lipoyl)lysine from octanoyl-[acyl-carrier-protein]: step 1/2. Functionally, catalyzes the transfer of endogenously produced octanoic acid from octanoyl-acyl-carrier-protein onto the lipoyl domains of lipoate-dependent enzymes. Lipoyl-ACP can also act as a substrate although octanoyl-ACP is likely to be the physiological substrate. This chain is Octanoyltransferase, found in Agrobacterium fabrum (strain C58 / ATCC 33970) (Agrobacterium tumefaciens (strain C58)).